The primary structure comprises 29 residues: Cytochrome c oxidase subunit 7A2, mitochondrial (29 aa).

Lysine 10 is modified (N6-acetyllysine).

Belongs to the cytochrome c oxidase VIIa family. As to quaternary structure, component of the cytochrome c oxidase (complex IV, CIV), a multisubunit enzyme composed of 14 subunits. The complex is composed of a catalytic core of 3 subunits MT-CO1, MT-CO2 and MT-CO3, encoded in the mitochondrial DNA, and 11 supernumerary subunits COX4I, COX5A, COX5B, COX6A, COX6B, COX6C, COX7A, COX7B, COX7C, COX8 and NDUFA4, which are encoded in the nuclear genome. The complex exists as a monomer or a dimer and forms supercomplexes (SCs) in the inner mitochondrial membrane with NADH-ubiquinone oxidoreductase (complex I, CI) and ubiquinol-cytochrome c oxidoreductase (cytochrome b-c1 complex, complex III, CIII), resulting in different assemblies (supercomplex SCI(1)III(2)IV(1) and megacomplex MCI(2)III(2)IV(2)). Interacts with PET100.

The protein resides in the mitochondrion inner membrane. It participates in energy metabolism; oxidative phosphorylation. Functionally, component of the cytochrome c oxidase, the last enzyme in the mitochondrial electron transport chain which drives oxidative phosphorylation. The respiratory chain contains 3 multisubunit complexes succinate dehydrogenase (complex II, CII), ubiquinol-cytochrome c oxidoreductase (cytochrome b-c1 complex, complex III, CIII) and cytochrome c oxidase (complex IV, CIV), that cooperate to transfer electrons derived from NADH and succinate to molecular oxygen, creating an electrochemical gradient over the inner membrane that drives transmembrane transport and the ATP synthase. Cytochrome c oxidase is the component of the respiratory chain that catalyzes the reduction of oxygen to water. Electrons originating from reduced cytochrome c in the intermembrane space (IMS) are transferred via the dinuclear copper A center (CU(A)) of subunit 2 and heme A of subunit 1 to the active site in subunit 1, a binuclear center (BNC) formed by heme A3 and copper B (CU(B)). The BNC reduces molecular oxygen to 2 water molecules using 4 electrons from cytochrome c in the IMS and 4 protons from the mitochondrial matrix. The polypeptide is Cytochrome c oxidase subunit 7A2, mitochondrial (COX7A2) (Canis lupus familiaris (Dog)).